Reading from the N-terminus, the 166-residue chain is Large ribosomal subunit protein uL10 (166 aa).

The protein belongs to the universal ribosomal protein uL10 family. Part of the ribosomal stalk of the 50S ribosomal subunit. The N-terminus interacts with L11 and the large rRNA to form the base of the stalk. The C-terminus forms an elongated spine to which L12 dimers bind in a sequential fashion forming a multimeric L10(L12)X complex.

Functionally, forms part of the ribosomal stalk, playing a central role in the interaction of the ribosome with GTP-bound translation factors. This Pseudomonas syringae pv. syringae (strain B728a) protein is Large ribosomal subunit protein uL10.